Here is a 214-residue protein sequence, read N- to C-terminus: Calcineurin B-like protein 8 (214 aa).

4 EF-hand domains span residues 35–70, 71–106, 108–143, and 152–187; these read EIEALHDLFKKLSTSIINDGLIHKEEFLLALFRNGS, MQNLFADRVFYMFDRKRNGVIEFGEFVRSLSIFHPY, PEHEKSAFMFKLFDLHGTGFIEPHELKKMVGALLGE, and SIEAIVEQTMLEVDTNKDGKIDEEEWKELVAKNPSI. Residues aspartate 165, asparagine 167, aspartate 169, lysine 171, and glutamate 176 each coordinate Ca(2+). Residue serine 205 is modified to Phosphoserine.

This sequence belongs to the calcineurin regulatory subunit family. As to quaternary structure, interacts with CIPK23. Interacts with CIPK14 at the cell membrane exclusively.

The protein localises to the cytoplasm. It localises to the nucleus. It is found in the cell membrane. In terms of biological role, acts as a calcium sensor. CBL proteins interact with CIPK serine-threonine protein kinases. Binding of a CBL protein to the regulatory NAF domain of a CIPK protein lead to the activation of the kinase in a calcium-dependent manner. This Arabidopsis thaliana (Mouse-ear cress) protein is Calcineurin B-like protein 8 (CBL8).